The primary structure comprises 326 residues: Phospho-N-acetylmuramoyl-pentapeptide-transferase (326 aa).

Helical transmembrane passes span 3–23 (ISISAGIVTFLLTLVGIPAFI), 51–71 (TMGGLVFLIAAVVVSFLVALF), 79–99 (VGMILFILVLYGLVGFLDDFL), 115–135 (LALQLLGGVIFYLFYERGGDM), 138–158 (VFGYQVHLGIFYIIFALFWLV), 169–189 (GIDGLASISVVISLSAYGVIA), 195–215 (MDILLVIFAMIGGLLGFFVFN), 221–243 (VFMGDVGSLALGGMLAAISMALH), and 306–326 (FFFWGVGLLASLLTFAILYLM).

The protein belongs to the glycosyltransferase 4 family. MraY subfamily. Requires Mg(2+) as cofactor.

Its subcellular location is the cell membrane. It carries out the reaction UDP-N-acetyl-alpha-D-muramoyl-L-alanyl-gamma-D-glutamyl-L-lysyl-D-alanyl-D-alanine + di-trans,octa-cis-undecaprenyl phosphate = Mur2Ac(oyl-L-Ala-gamma-D-Glu-L-Lys-D-Ala-D-Ala)-di-trans,octa-cis-undecaprenyl diphosphate + UMP. The protein operates within cell wall biogenesis; peptidoglycan biosynthesis. Its function is as follows. Catalyzes the initial step of the lipid cycle reactions in the biosynthesis of the cell wall peptidoglycan: transfers peptidoglycan precursor phospho-MurNAc-pentapeptide from UDP-MurNAc-pentapeptide onto the lipid carrier undecaprenyl phosphate, yielding undecaprenyl-pyrophosphoryl-MurNAc-pentapeptide, known as lipid I. In Streptococcus pneumoniae (strain Taiwan19F-14), this protein is Phospho-N-acetylmuramoyl-pentapeptide-transferase.